The chain runs to 88 residues: Kunitz-type U15-theraphotoxin-Hhn1f (88 aa).

Residues methionine 1–alanine 27 form the signal peptide. The propeptide occupies glutamate 28–arginine 33. The BPTI/Kunitz inhibitor domain occupies cysteine 37–cysteine 85. Cystine bridges form between cysteine 37-cysteine 85 and cysteine 60-cysteine 81.

It belongs to the venom Kunitz-type family. 03 (sub-Kunitz) subfamily. Expressed by the venom gland.

It is found in the secreted. Its function is as follows. Serine protease inhibitor that inhibits trypsin at a molar ratio of 1:1. The sequence is that of Kunitz-type U15-theraphotoxin-Hhn1f from Cyriopagopus hainanus (Chinese bird spider).